We begin with the raw amino-acid sequence, 128 residues long: Ribonuclease P protein component (128 aa).

It belongs to the RnpA family. As to quaternary structure, consists of a catalytic RNA component (M1 or rnpB) and a protein subunit.

It carries out the reaction Endonucleolytic cleavage of RNA, removing 5'-extranucleotides from tRNA precursor.. Its function is as follows. RNaseP catalyzes the removal of the 5'-leader sequence from pre-tRNA to produce the mature 5'-terminus. It can also cleave other RNA substrates such as 4.5S RNA. The protein component plays an auxiliary but essential role in vivo by binding to the 5'-leader sequence and broadening the substrate specificity of the ribozyme. The protein is Ribonuclease P protein component of Prochlorococcus marinus (strain MIT 9313).